The chain runs to 291 residues: Quinol oxidase subunit 2 (291 aa).

The first 28 residues, 1–28 (MQLKKAFWKLASLLPLSLLLFLGGCDKK), serve as a signal peptide directing secretion. Transmembrane regions (helical) follow at residues 49–69 (SFLLMSLIIAIVFILFTVILI) and 91–111 (LEIIWTLVPVIIVIALSIPTV).

This sequence belongs to the cytochrome c oxidase subunit 2 family.

The protein resides in the cell membrane. The catalysed reaction is 2 a quinol + O2 = 2 a quinone + 2 H2O. In terms of biological role, catalyzes quinol oxidation with the concomitant reduction of oxygen to water. Subunit II transfers the electrons from a quinol to the binuclear center of the catalytic subunit I. This is Quinol oxidase subunit 2 from Bacillus cereus (strain ATCC 14579 / DSM 31 / CCUG 7414 / JCM 2152 / NBRC 15305 / NCIMB 9373 / NCTC 2599 / NRRL B-3711).